The primary structure comprises 306 residues: RNA pseudouridylate synthase domain-containing protein 1 (306 aa).

Residue M1 is modified to N-acetylmethionine. D67 is an active-site residue. Residues 255 to 290 are disordered; that stretch reads RTDPDPDPMSGGPRPCSPSTPQPRPGRPPPETEAQR. Positions 269–285 are enriched in pro residues; sequence PCSPSTPQPRPGRPPPE.

This sequence belongs to the pseudouridine synthase RluA family.

This Mus musculus (Mouse) protein is RNA pseudouridylate synthase domain-containing protein 1 (Rpusd1).